We begin with the raw amino-acid sequence, 498 residues long: Galactose-1-phosphate uridylyltransferase (498 aa).

It belongs to the galactose-1-phosphate uridylyltransferase type 2 family.

Its subcellular location is the cytoplasm. It catalyses the reaction alpha-D-galactose 1-phosphate + UDP-alpha-D-glucose = alpha-D-glucose 1-phosphate + UDP-alpha-D-galactose. It functions in the pathway carbohydrate metabolism; galactose metabolism. The polypeptide is Galactose-1-phosphate uridylyltransferase (Clostridium perfringens (strain SM101 / Type A)).